The chain runs to 648 residues: UDP-galactose:fucoside alpha-3-galactosyltransferase (648 aa).

7 WD repeats span residues 320-358 (NHTD…GNDT), 372-420 (HKRG…IQTF), 422-461 (GHTG…FKRV), 464-505 (GHNG…NIIK), 507-546 (NQGG…NFND), 556-595 (NENS…NNNN), and 617-648 (HLNS…SWDL).

This sequence belongs to the glycosyltransferase 77 family. Mn(2+) is required as a cofactor.

It localises to the cytoplasm. It catalyses the reaction an alpha-L-fucosyl-(1-&gt;2)-beta-D-galactosyl derivative + UDP-alpha-D-galactose = an alpha-D-galactosyl-(1-&gt;3)-[alpha-L-fucosyl-(1-&gt;2)]-beta-D-galactosyl derivative + UDP + H(+). The protein operates within protein modification; protein glycosylation. Its activity is regulated as follows. Stimulated by dithiothreitol (DTT) in vitro. Totally inhibited by EDTA. In terms of biological role, specifically catalyzes the transfer of a galactosyl residue to the hydroxyproline-linked saccharide on Skp1 protein (fpaA/fpaB). Catalyzes the formation of a Gal-alpha-1,3-Fuc linkage, leading to Gal-Fuc-Gal-GlcNAc-HyPro143-Skp1. The protein is UDP-galactose:fucoside alpha-3-galactosyltransferase (agtA) of Dictyostelium discoideum (Social amoeba).